The chain runs to 371 residues: Uroporphyrinogen decarboxylase (371 aa).

Positions 1–14 (MARWATMSTETTGT) are enriched in polar residues. Positions 1–30 (MARWATMSTETTGTGARDEGPRPGDPADSP) are disordered. Substrate contacts are provided by residues 49–53 (RQAGR), Asp98, Tyr173, Ser228, and His342.

Belongs to the uroporphyrinogen decarboxylase family. Homodimer.

Its subcellular location is the cytoplasm. It catalyses the reaction uroporphyrinogen III + 4 H(+) = coproporphyrinogen III + 4 CO2. It functions in the pathway porphyrin-containing compound metabolism; protoporphyrin-IX biosynthesis; coproporphyrinogen-III from 5-aminolevulinate: step 4/4. Functionally, catalyzes the decarboxylation of four acetate groups of uroporphyrinogen-III to yield coproporphyrinogen-III. This Salinispora tropica (strain ATCC BAA-916 / DSM 44818 / JCM 13857 / NBRC 105044 / CNB-440) protein is Uroporphyrinogen decarboxylase.